A 378-amino-acid polypeptide reads, in one-letter code: MKHNTLRAVFQFSFFIGICTFIMIAGYSYQINYNQRMGIFYGGNITFKKVPKVVIYTATPFFDVPIENSILRDCSEKIKNSCTVTSNNKTFPIADAIVFHSRDINETKLSFFNKNRRYDIPYIMMAMENPFFAGLTVYHNFFNWTMTYRTDSDIFHPYGAFVKSYVPAEVNYSEIWNSKTKETLWMVSNGNAQNKRKELVEKLIKKGMSIDLYGQLYKKEPAECPRRRGPPGCDVKFHSPYKFAIAFENSNCKDYVTEKFWKKAGIYKTVPIVMSRKIYRDLGIPDSMYIAVDDYPNLEEFVHHIQNVTSNEEEYMKYHKWRKQFKIVDTNEGNIGFCQLCQKLAGYKRKLVPHKVYENLNSWHSTSTCDNSFATRFL.

Residues 1 to 7 lie on the Cytoplasmic side of the membrane; that stretch reads MKHNTLR. The chain crosses the membrane as a helical; Signal-anchor for type II membrane protein span at residues 8–28; sequence AVFQFSFFIGICTFIMIAGYS. Residues 29-378 are Lumenal-facing; the sequence is YQINYNQRMG…CDNSFATRFL (350 aa). N44, N88, N105, N143, N171, and N307 each carry an N-linked (GlcNAc...) asparagine glycan.

It belongs to the glycosyltransferase 10 family. Ca(2+) serves as cofactor. In terms of processing, N-glycosylated.

Its subcellular location is the golgi apparatus. It localises to the golgi stack membrane. It catalyses the reaction a beta-D-galactosyl-(1-&gt;3)-N-acetyl-beta-D-glucosaminyl derivative + GDP-beta-L-fucose = a beta-D-galactosyl-(1-&gt;3)-[alpha-L-fucosyl-(1-&gt;4)]-N-acetyl-beta-D-glucosaminyl derivative + GDP + H(+). It participates in protein modification; protein glycosylation. Its activity is regulated as follows. Inhibited by Cu(2+) and Ni(2+), and to a lesser extent by EDTA, Mn(2+) and Mg(2+). In terms of biological role, catalyzes the addition of fucose in alpha 1-3 linkage to GalNAc-beta-1-&gt;4-GlcNAc-beta-1-&gt;3-Gal-beta-1-&gt;4-Glc (LDNT)acceptor. Unlike fut-1, does not add fucose to Man-alpha-1-&gt;3-(Man-alpha-1-&gt;6)-Man-beta-1-&gt;4-GlcNAc-beta-1-&gt;4-GlcNAc-beta-1-Asn (M3), Man-alpha-1-&gt;3-(Man-alpha-1-&gt;6)-Man-beta-1-&gt;4-GlcNAc-beta-1-&gt;4-(Fuc-alpha-1-&gt;6)-GlcNAc-beta-1-Asn (M3F6) or GlcNAc-beta-1-&gt;2-Man-alpha-1-&gt;3-(GlcNAc-beta-1-&gt;2-Man-alpha-1-&gt;6)-Man-beta-1-4-GlcNAc-beta-1-&gt;4-(Fuc-alpha-1-&gt;6)-GlcNAc-beta-1-Asn (GnM3F6) acceptors. The polypeptide is Alpha-(1,3)-fucosyltransferase fut-5 (Caenorhabditis elegans).